The primary structure comprises 527 residues: Catalase (527 aa).

Over residues 1–22 (MADSRDPASDQMKLWKEQRAAQ) the composition is skewed to basic and acidic residues. Residues 1 to 34 (MADSRDPASDQMKLWKEQRAAQKPDVLTTGGGNP) form a disordered region. N-acetylalanine is present on Ala-2. Residue Ser-9 is modified to Phosphoserine. Position 13 is an N6-succinyllysine (Lys-13). Catalysis depends on residues His-75 and Asn-148. NADP(+) is bound by residues His-194, Ser-201, Arg-203, and Asn-213. Lys-221 carries the post-translational modification N6-succinyllysine. An N6-acetyllysine modification is found at Lys-233. The NADP(+) site is built by Lys-237, Trp-303, and His-305. Tyr-358 contacts heme. Phosphoserine occurs at positions 422 and 434. N6-acetyllysine; alternate occurs at positions 449 and 480. An N6-succinyllysine; alternate mark is found at Lys-449 and Lys-480. The residue at position 499 (Lys-499) is an N6-acetyllysine. At Thr-511 the chain carries Phosphothreonine. Position 517 is a phosphoserine (Ser-517). The short motif at 524–527 (KANL) is the Microbody targeting signal; atypical element.

The protein belongs to the catalase family. In terms of assembly, homotetramer. Interacts (via microbody targeting signal) with PEX5, monomeric form interacts with PEX5, leading to its translocation into peroxisomes. Heme serves as cofactor. NADP(+) is required as a cofactor.

The protein localises to the peroxisome matrix. The enzyme catalyses 2 H2O2 = O2 + 2 H2O. Functionally, catalyzes the degradation of hydrogen peroxide (H(2)O(2)) generated by peroxisomal oxidases to water and oxygen, thereby protecting cells from the toxic effects of hydrogen peroxide. Promotes growth of cells including T-cells, B-cells, myeloid leukemia cells, melanoma cells, mastocytoma cells and normal and transformed fibroblast cells. This Canis lupus familiaris (Dog) protein is Catalase (CAT).